We begin with the raw amino-acid sequence, 1079 residues long: Translation initiation factor IF-2 (1079 aa).

3 stretches are compositionally biased toward basic and acidic residues: residues 52 to 65 (VQAQ…KEGN), 75 to 90 (RDGD…KAPE), and 102 to 134 (APER…KEPQ). A disordered region spans residues 52 to 488 (VQAQRDGGAR…RGKKDVRPAA (437 aa)). Over residues 150–184 (APVAKVVEAAPAETPAPEAPAVKATVTAEAAPAKT) the composition is skewed to low complexity. Positions 185-194 (VEPESERPQA) are enriched in basic and acidic residues. Over residues 276 to 291 (AAVAQQQMQQQAAQQQ) the composition is skewed to low complexity. Basic and acidic residues predominate over residues 306-327 (GGYRPEGQREGGYRPEGQREGG). Low complexity-rich tracts occupy residues 348–370 (EGGY…GPRP) and 380–398 (PGAP…APRP). Residues 419–429 (PRPGGFGGAPG) are compositionally biased toward gly residues. The segment covering 461-471 (PRGRSDDDVMR) has biased composition (basic and acidic residues). Residues 473–482 (PRGRGKRGKK) are compositionally biased toward basic residues. Positions 578–745 (TRPPVVTIMG…LIAIQAEILE (168 aa)) constitute a tr-type G domain. The interval 587–594 (GHVDHGKT) is G1. 587–594 (GHVDHGKT) lines the GTP pocket. The segment at 612–616 (GITQH) is G2. Residues 633 to 636 (DTPG) form a G3 region. GTP contacts are provided by residues 633–637 (DTPGH) and 687–690 (NKMD). Residues 687–690 (NKMD) are G4. The tract at residues 723–725 (SAK) is G5.

This sequence belongs to the TRAFAC class translation factor GTPase superfamily. Classic translation factor GTPase family. IF-2 subfamily.

It localises to the cytoplasm. Functionally, one of the essential components for the initiation of protein synthesis. Protects formylmethionyl-tRNA from spontaneous hydrolysis and promotes its binding to the 30S ribosomal subunits. Also involved in the hydrolysis of GTP during the formation of the 70S ribosomal complex. This chain is Translation initiation factor IF-2, found in Nitratidesulfovibrio vulgaris (strain DP4) (Desulfovibrio vulgaris).